A 217-amino-acid polypeptide reads, in one-letter code: Small ribosomal subunit protein uS3 (217 aa).

One can recognise a KH type-2 domain in the interval 38–106; that stretch reads VRKYIETALK…RVHINIIEIK (69 aa).

Belongs to the universal ribosomal protein uS3 family. In terms of assembly, part of the 30S ribosomal subunit. Forms a tight complex with proteins S10 and S14.

In terms of biological role, binds the lower part of the 30S subunit head. Binds mRNA in the 70S ribosome, positioning it for translation. The chain is Small ribosomal subunit protein uS3 from Lysinibacillus sphaericus (strain C3-41).